The chain runs to 519 residues: Importin subunit alpha-5 (519 aa).

The region spanning 1–58 (MSLRPSTKTEIRRIRYKVSVDAEEGRRRREDFLVEIRKSKRNENLMKKRRVKVLPPDY) is the IBB domain. 8 ARM repeats span residues 103 to 143 (SPPT…NIAS), 146 to 185 (SEHTKVVIDHGVVPLFVQLLASPDDDVREQAIWGLGNVAG), 188 to 228 (IQCR…NFFR), 230 to 269 (KPSPPFDLVKHVLPVLKRLVYSDDEQVLIDACWALSNLSD), 272 to 311 (NENIQSVIEAGVVPRLVELLQHASPVVLVPALRCIGNIVS), 314 to 354 (SQQT…NITA), 357 to 396 (EEQIQSVIDANLIPSLVNLAQHAEFDIKKEAIWAISNASV), and 400 to 439 (PNQIKYLVEQNCIKALCDILVCPDLRIILVSLGGLEMILI).

This sequence belongs to the importin alpha family. Forms a complex with importin subunit beta-1.

The protein localises to the nucleus envelope. Binds to conventional NLS motifs and mediates nuclear protein import across the nuclear envelope. This Arabidopsis thaliana (Mouse-ear cress) protein is Importin subunit alpha-5.